A 388-amino-acid polypeptide reads, in one-letter code: Methylthioribose-1-phosphate isomerase (388 aa).

Asp-258 serves as the catalytic Proton donor.

It belongs to the eIF-2B alpha/beta/delta subunits family. MtnA subfamily.

It is found in the cytoplasm. It localises to the nucleus. The enzyme catalyses 5-(methylsulfanyl)-alpha-D-ribose 1-phosphate = 5-(methylsulfanyl)-D-ribulose 1-phosphate. Its pathway is amino-acid biosynthesis; L-methionine biosynthesis via salvage pathway; L-methionine from S-methyl-5-thio-alpha-D-ribose 1-phosphate: step 1/6. Its function is as follows. Catalyzes the interconversion of methylthioribose-1-phosphate (MTR-1-P) into methylthioribulose-1-phosphate (MTRu-1-P). The polypeptide is Methylthioribose-1-phosphate isomerase (Sordaria macrospora (strain ATCC MYA-333 / DSM 997 / K(L3346) / K-hell)).